Here is a 68-residue protein sequence, read N- to C-terminus: Neuronal regeneration-related protein (68 aa).

The disordered stretch occupies residues 22–54 (EGRLPKGRLPVPKEVNRKKNDETNAASLTPLGS). A compositionally biased stretch (polar residues) spans 44–54 (TNAASLTPLGS). Ser59 is modified (phosphoserine).

Interacts with the latency-associated peptides (LAP) of TGFB1 and TGFB2; the interaction results in a decrease in TGFB autoinduction. Interacts with FLNA. Post-translationally, phosphorylated on Ser-59. Phosphorylation decreases stability and activity. As to expression, expressed in lung (at protein level).

The protein resides in the cytoplasm. Its function is as follows. May have roles in neural function. Ectopic expression augments motility of gliomas. Also promotes axonal regeneration. May also have functions in cellular differentiation. Induces differentiation of fibroblast into myofibroblast and myofibroblast ameboid migration. Increases retinoic-acid regulation of lipid-droplet biogenesis. Down-regulates the expression of TGFB1 and TGFB2 but not of TGFB3. May play a role in the regulation of alveolar generation. This is Neuronal regeneration-related protein (NREP) from Homo sapiens (Human).